A 321-amino-acid chain; its full sequence is o-succinylbenzoate synthase (321 aa).

K134 functions as the Proton donor in the catalytic mechanism. Positions 162, 191, and 214 each coordinate Mg(2+). K236 serves as the catalytic Proton acceptor.

It belongs to the mandelate racemase/muconate lactonizing enzyme family. MenC type 1 subfamily. A divalent metal cation is required as a cofactor.

The catalysed reaction is (1R,6R)-6-hydroxy-2-succinyl-cyclohexa-2,4-diene-1-carboxylate = 2-succinylbenzoate + H2O. It participates in quinol/quinone metabolism; 1,4-dihydroxy-2-naphthoate biosynthesis; 1,4-dihydroxy-2-naphthoate from chorismate: step 4/7. It functions in the pathway quinol/quinone metabolism; menaquinone biosynthesis. Its function is as follows. Converts 2-succinyl-6-hydroxy-2,4-cyclohexadiene-1-carboxylate (SHCHC) to 2-succinylbenzoate (OSB). The chain is o-succinylbenzoate synthase from Klebsiella pneumoniae (strain 342).